Reading from the N-terminus, the 84-residue chain is Small ribosomal subunit protein uS15 (84 aa).

Belongs to the universal ribosomal protein uS15 family. Part of the 30S ribosomal subunit. Forms a bridge to the 50S subunit in the 70S ribosome, contacting the 23S rRNA.

In terms of biological role, one of the primary rRNA binding proteins, it binds directly to 16S rRNA where it helps nucleate assembly of the platform of the 30S subunit by binding and bridging several RNA helices of the 16S rRNA. Its function is as follows. Forms an intersubunit bridge (bridge B4) with the 23S rRNA of the 50S subunit in the ribosome. In Fervidobacterium nodosum (strain ATCC 35602 / DSM 5306 / Rt17-B1), this protein is Small ribosomal subunit protein uS15.